Reading from the N-terminus, the 141-residue chain is UPF0310 protein Mflv_0785 (141 aa).

This sequence belongs to the UPF0310 family.

The chain is UPF0310 protein Mflv_0785 from Mycolicibacterium gilvum (strain PYR-GCK) (Mycobacterium gilvum (strain PYR-GCK)).